The chain runs to 84 residues: UPF0298 protein NWMN_0985 (84 aa).

It belongs to the UPF0298 family.

It is found in the cytoplasm. The protein is UPF0298 protein NWMN_0985 of Staphylococcus aureus (strain Newman).